Reading from the N-terminus, the 346-residue chain is MNPHATPVLVLSLALGTTITISSNHWVLAWTGLEINTLAIIPLISKSHHPRAVEAATKYFLTQAAASALVLFSSMTNAWATGQWDITQLNHPTSCLLLTAAIAIKLGLVPFHFWFPEVLQGSPLMTALLLSTLMKFPPLTLLLMTSKSLNPALLTTMALASAALGGWMGLNQTQTRKILAFSSISHLGWIAIILVYSPKLALLTFYLYTIMTSAVFMALNKIKALNMSMVLTSWTKTPVLNATLMLMLLSLAGLPPLTGFMPKWLIIQELTKQEMTPAAMAIAMLSLLSLFFYLRLAYHSTITLPPNSSNHMKQWYTSKPPSTPTAILASLSILLLPLSPMVHAIV.

The next 11 membrane-spanning stretches (helical) occupy residues 1-21 (MNPH…TITI), 25-45 (HWVL…PLIS), 60-80 (FLTQ…NAWA), 95-115 (CLLL…HFWF), 124-144 (LMTA…LLLM), 149-169 (LNPA…GWMG), 178-195 (ILAF…IILV), 200-219 (LALL…FMAL), 242-262 (ATLM…GFMP), 274-294 (EMTP…FFYL), and 326-346 (AILA…HAIV).

This sequence belongs to the complex I subunit 2 family.

Its subcellular location is the mitochondrion inner membrane. The enzyme catalyses a ubiquinone + NADH + 5 H(+)(in) = a ubiquinol + NAD(+) + 4 H(+)(out). Functionally, core subunit of the mitochondrial membrane respiratory chain NADH dehydrogenase (Complex I) that is believed to belong to the minimal assembly required for catalysis. Complex I functions in the transfer of electrons from NADH to the respiratory chain. The immediate electron acceptor for the enzyme is believed to be ubiquinone. This is NADH-ubiquinone oxidoreductase chain 2 (MT-ND2) from Mareca penelope (Eurasian wigeon).